The sequence spans 351 residues: Selenide, water dikinase (351 aa).

The active site involves U15. A non-standard amino acid (selenocysteine) is located at residue U15. Residues K18 and 47–49 (DNE) contribute to the ATP site. D50 is a Mg(2+) binding site. ATP is bound by residues D67, D90, and 138-140 (GHS). D90 serves as a coordination point for Mg(2+). D227 is a binding site for Mg(2+).

It belongs to the selenophosphate synthase 1 family. Class I subfamily. In terms of assembly, homodimer. Requires Mg(2+) as cofactor.

It catalyses the reaction hydrogenselenide + ATP + H2O = selenophosphate + AMP + phosphate + 2 H(+). Its function is as follows. Synthesizes selenophosphate from selenide and ATP. This Nitratidesulfovibrio vulgaris (strain ATCC 29579 / DSM 644 / CCUG 34227 / NCIMB 8303 / VKM B-1760 / Hildenborough) (Desulfovibrio vulgaris) protein is Selenide, water dikinase.